The following is a 141-amino-acid chain: MLTEDDKQLIQHVWETVLEHQEDFGAEALERMFTVYPSTKTYFPHFDLHHGSEQIRHHGKKVVGALGDAVRHIDDLSATLSELSNLHAYNLRVDPVNFKLLSHCFQVVLGAHLGREYTPQVQVAYDKFLAAVSAVLAEKYR.

The region spanning 1–141 (MLTEDDKQLI…VSAVLAEKYR (141 aa)) is the Globin domain. The heme b site is built by H58 and H87.

This sequence belongs to the globin family. In terms of assembly, heterotetramer of two alpha-D chains and two beta chains. Red blood cells.

Involved in oxygen transport from the lung to the various peripheral tissues. This chain is Hemoglobin subunit alpha-D (HBAD), found in Chelonoidis niger (Galapagos giant tortoise).